Consider the following 265-residue polypeptide: MNTYKTYSERGQQHPNACARSLFELMERNESNLSVAVDVTTKKELLSIADAVGPFVCVLKTHIDIVEDFDHDLVAQLEQLAKKHDFLIFEDRKFADIGNTVKHQYANGIYKIASWSHITNAHTVPGEGIIKGLGEVGLPLGRGLLLLAEMSSKGALTKGSYTSESVEMARRNKDFVFGFIAQHKMNEHDDEDFVVMSPGVGLDVKGDGLGQQYRTPHEVIVESGGDIIIVGRGIYGNPDQVEAQAKRYRQAGWDAYLERVRLHKK.

Substrate is bound by residues D38, 60–62, 91–100, Y213, and R232; these read KTH and DRKFADIGNT. K93 acts as the Proton donor in catalysis.

The protein belongs to the OMP decarboxylase family.

The enzyme catalyses orotidine 5'-phosphate + H(+) = UMP + CO2. It participates in pyrimidine metabolism; UMP biosynthesis via de novo pathway; UMP from orotate: step 2/2. This Mucor circinelloides f. lusitanicus (Mucor racemosus var. lusitanicus) protein is Orotidine 5'-phosphate decarboxylase (pyrG).